The chain runs to 290 residues: Non-homologous end joining protein Ku (290 aa).

The Ku domain occupies 11-183 (TFGLISMPVR…EAPKITSEVK (173 aa)). Residues 253-290 (MKDQKKGSRLAEVDKESTVQMTPKKPAVKERRGRKRVA) are disordered. Positions 254–269 (KDQKKGSRLAEVDKES) are enriched in basic and acidic residues.

It belongs to the prokaryotic Ku family. In terms of assembly, homodimer. Interacts with LigD.

Its function is as follows. With LigD forms a non-homologous end joining (NHEJ) DNA repair enzyme, which repairs dsDNA breaks with reduced fidelity. Binds linear dsDNA with 5'- and 3'- overhangs but not closed circular dsDNA nor ssDNA. Recruits and stimulates the ligase activity of LigD. The polypeptide is Non-homologous end joining protein Ku (Koribacter versatilis (strain Ellin345)).